A 1408-amino-acid polypeptide reads, in one-letter code: DNA-directed RNA polymerase subunit beta'' (1408 aa).

It belongs to the RNA polymerase beta' chain family. RpoC2 subfamily. In plastids the minimal PEP RNA polymerase catalytic core is composed of four subunits: alpha, beta, beta', and beta''. When a (nuclear-encoded) sigma factor is associated with the core the holoenzyme is formed, which can initiate transcription.

It is found in the plastid. It localises to the chloroplast. It catalyses the reaction RNA(n) + a ribonucleoside 5'-triphosphate = RNA(n+1) + diphosphate. In terms of biological role, DNA-dependent RNA polymerase catalyzes the transcription of DNA into RNA using the four ribonucleoside triphosphates as substrates. This chain is DNA-directed RNA polymerase subunit beta'', found in Psilotum nudum (Whisk fern).